A 358-amino-acid polypeptide reads, in one-letter code: L-lysine 3-hydroxylase (358 aa).

Fe cation-binding residues include histidine 178, glutamate 180, and histidine 314. A 2-oxoglutarate-binding site is contributed by arginine 328.

Belongs to the clavaminate synthase family. It depends on Fe(2+) as a cofactor.

The enzyme catalyses L-lysine + 2-oxoglutarate + O2 = (3S)-3-hydroxy-L-lysine + succinate + CO2. Its function is as follows. Alpha-ketoglutarate-dependent dioxygenase that in vitro catalyzes the regio- and stereoselective hydroxylation of L-lysine, leading to (3S)-3-hydroxy-L-lysine. Can also use (5R)-5-hydroxy-L-lysine as substrate, but neither D-lysine nor L-ornithine. This chain is L-lysine 3-hydroxylase, found in Catenulispora acidiphila (strain DSM 44928 / JCM 14897 / NBRC 102108 / NRRL B-24433 / ID139908).